Consider the following 1648-residue polypeptide: Vitellogenin-6 (1648 aa).

A signal peptide spans 1 to 15; that stretch reads MRFAVLLALFGLALA. Positions 26 to 691 constitute a Vitellogenin domain; sequence YRSGREYRYQ…SNDSVLPKEI (666 aa). Disulfide bonds link Cys178–Cys203 and Cys219–Cys222. Asn237, Asn371, and Asn683 each carry an N-linked (GlcNAc...) asparagine glycan. A disordered region spans residues 1070–1092; that stretch reads EKNVEYEQEDKEPKSSQLQSQIR. N-linked (GlcNAc...) asparagine glycosylation is present at Asn1295. The VWFD domain occupies 1346–1514; that stretch reads PECIVKSKEI…SYLSKDDECE (169 aa). 2 cysteine pairs are disulfide-bonded: Cys1348–Cys1477 and Cys1370–Cys1513. N-linked (GlcNAc...) asparagine glycans are attached at residues Asn1584 and Asn1617.

Post-translationally, the precursor protein is probably further processed into vitellin polypeptides VT2 and VT3. In terms of processing, both VT2 and VT3 polypeptides seem to be N-glycosylated.

The protein localises to the secreted. Functionally, precursor of the egg-yolk proteins that are sources of nutrients during embryonic development. The chain is Vitellogenin-6 (vit-6) from Oscheius tipulae.